A 265-amino-acid polypeptide reads, in one-letter code: Putative 2-amino-3,7-dideoxy-D-threo-hept-6-ulosonate synthase 2 (265 aa).

Asp-27 (proton acceptor) is an active-site residue. 1-deoxy-D-threo-hexo-2,5-diulose 6-phosphate-binding positions include 27–31 (DHGVS) and 147–149 (YPR). The Proton donor role is filled by Tyr-147. Lys-177 acts as the Schiff-base intermediate with substrate in catalysis. Residues 202–203 (GG) and 230–231 (GR) contribute to the 1-deoxy-D-threo-hexo-2,5-diulose 6-phosphate site.

Belongs to the DeoC/FbaB aldolase family. ADHS subfamily. Homodecamer.

It catalyses the reaction 1-deoxy-D-threo-hexo-2,5-diulose 6-phosphate + L-aspartate 4-semialdehyde = 2,3-dioxopropyl phosphate + 2-amino-2,3,7-trideoxy-D-lyxo-hept-6-ulosonate. In terms of biological role, catalyzes a transaldol reaction between 6-deoxy-5-ketofructose 1-phosphate (DKFP) and L-aspartate semialdehyde (ASA) with an elimination of hydroxypyruvaldehyde phosphate to yield 2-amino-3,7-dideoxy-D-threo-hept-6-ulosonate (ADH). Plays a key role in an alternative pathway of the biosynthesis of 3-dehydroquinate (DHQ), which is involved in the canonical pathway for the biosynthesis of aromatic amino acids. The polypeptide is Putative 2-amino-3,7-dideoxy-D-threo-hept-6-ulosonate synthase 2 (Archaeoglobus fulgidus (strain ATCC 49558 / DSM 4304 / JCM 9628 / NBRC 100126 / VC-16)).